Reading from the N-terminus, the 164-residue chain is Peptidyl-prolyl cis-trans isomerase A-like 4G (164 aa).

The region spanning 7–163 (FFDITVDGKP…KKITIADCGQ (157 aa)) is the PPIase cyclophilin-type domain.

The protein belongs to the cyclophilin-type PPIase family. PPIase A subfamily.

It localises to the cytoplasm. The catalysed reaction is [protein]-peptidylproline (omega=180) = [protein]-peptidylproline (omega=0). PPIases accelerate the folding of proteins. It catalyzes the cis-trans isomerization of proline imidic peptide bonds in oligopeptides. This Homo sapiens (Human) protein is Peptidyl-prolyl cis-trans isomerase A-like 4G (PPIAL4G).